Consider the following 37-residue polypeptide: Potassium channel toxin alpha-KTx 2.19 (37 aa).

Cystine bridges form between Cys-7–Cys-28, Cys-13–Cys-33, and Cys-17–Cys-35.

As to expression, expressed by the venom gland.

Its subcellular location is the secreted. Inhibitor of voltage-gated potassium channels. This chain is Potassium channel toxin alpha-KTx 2.19, found in Rhopalurus junceus (Caribbean blue scorpion).